We begin with the raw amino-acid sequence, 264 residues long: Proliferating cell nuclear antigen 2 (264 aa).

It belongs to the PCNA family. As to quaternary structure, homotrimer. Oligomer. Interacts with ORC1 (via PIP-box motif). Interacts with FEN1.

The protein resides in the nucleus. Its subcellular location is the chromosome. The protein localises to the cytoplasm. May be involved in DNA damage response. Appears not to be involved in DNA replication in trophozoites. The chain is Proliferating cell nuclear antigen 2 from Plasmodium falciparum (isolate 3D7).